We begin with the raw amino-acid sequence, 325 residues long: RNA ligase 1 (325 aa).

Mg(2+) serves as cofactor. Mn(2+) is required as a cofactor. In terms of processing, AMPylates itself (auto-AMPylation).

It catalyses the reaction ATP + (ribonucleotide)n-3'-hydroxyl + 5'-phospho-(ribonucleotide)m = (ribonucleotide)n+m + AMP + diphosphate.. Functions as an RNA ligase, in vitro. The ligation reaction entails three nucleotidyl transfer steps. In the first step, the RNA ligase reacts with ATP in the absence of nucleic acid to form a covalent ligase-AMP intermediate and release pyrophosphate. In step 2, the ligase-AMP binds to the nucleic acid and transfers the adenylate to the 5'-PO4 terminus to form an adenylylated intermediate. In step 3, the RNA ligase directs the attack of the 3'-OH on the 5'-phosphoanhydride linkage, resulting in a repaired 3'-5' phosphodiester and release of AMP. Exhibits selectivity for single-stranded RNA substrates and may not have nick-sealing activity on double-stranded DNA-RNA hybrids. May play a role in maintaining RNA integrity under stress conditions, for example in response to reactive oxygen species (ROS). In Danio rerio (Zebrafish), this protein is RNA ligase 1.